Consider the following 117-residue polypeptide: Large ribosomal subunit protein bL17 (117 aa).

Belongs to the bacterial ribosomal protein bL17 family. As to quaternary structure, part of the 50S ribosomal subunit. Contacts protein L32.

This is Large ribosomal subunit protein bL17 from Coprothermobacter proteolyticus (strain ATCC 35245 / DSM 5265 / OCM 4 / BT).